We begin with the raw amino-acid sequence, 448 residues long: Trigger factor (448 aa).

Residues 162-243 (DDFAIIDIEA…VQQTKERKLP (82 aa)) form the PPIase FKBP-type domain. The interval 426–448 (DEGKAVDPSEYFGEEEESAEESE) is disordered. The span at 437 to 448 (FGEEEESAEESE) shows a compositional bias: acidic residues.

This sequence belongs to the FKBP-type PPIase family. Tig subfamily.

Its subcellular location is the cytoplasm. It catalyses the reaction [protein]-peptidylproline (omega=180) = [protein]-peptidylproline (omega=0). Functionally, involved in protein export. Acts as a chaperone by maintaining the newly synthesized protein in an open conformation. Functions as a peptidyl-prolyl cis-trans isomerase. The sequence is that of Trigger factor from Corynebacterium diphtheriae (strain ATCC 700971 / NCTC 13129 / Biotype gravis).